The sequence spans 504 residues: Glutamate--tRNA ligase (504 aa).

The 'HIGH' region signature appears at 12 to 22 (PSPTGALHIGG). The short motif at 260–264 (KLSKR) is the 'KMSKS' region element. Position 263 (lysine 263) interacts with ATP.

It belongs to the class-I aminoacyl-tRNA synthetase family. Glutamate--tRNA ligase type 1 subfamily. As to quaternary structure, monomer.

Its subcellular location is the cytoplasm. It catalyses the reaction tRNA(Glu) + L-glutamate + ATP = L-glutamyl-tRNA(Glu) + AMP + diphosphate. Functionally, catalyzes the attachment of glutamate to tRNA(Glu) in a two-step reaction: glutamate is first activated by ATP to form Glu-AMP and then transferred to the acceptor end of tRNA(Glu). The polypeptide is Glutamate--tRNA ligase (Bacteroides thetaiotaomicron (strain ATCC 29148 / DSM 2079 / JCM 5827 / CCUG 10774 / NCTC 10582 / VPI-5482 / E50)).